Consider the following 191-residue polypeptide: UPF0302 protein SA1295 (191 aa).

Belongs to the UPF0302 family.

This is UPF0302 protein SA1295 from Staphylococcus aureus (strain N315).